Here is a 337-residue protein sequence, read N- to C-terminus: Inositol 2-dehydrogenase (337 aa).

The protein belongs to the Gfo/Idh/MocA family. Homotetramer.

It carries out the reaction myo-inositol + NAD(+) = scyllo-inosose + NADH + H(+). Functionally, involved in the oxidation of myo-inositol (MI) to 2-keto-myo-inositol (2KMI or 2-inosose). The chain is Inositol 2-dehydrogenase from Burkholderia vietnamiensis (strain G4 / LMG 22486) (Burkholderia cepacia (strain R1808)).